Reading from the N-terminus, the 502-residue chain is ATP synthase subunit alpha (502 aa).

ATP is bound at residue 169–176; that stretch reads GDRQTGKT.

Belongs to the ATPase alpha/beta chains family. In terms of assembly, F-type ATPases have 2 components, CF(1) - the catalytic core - and CF(0) - the membrane proton channel. CF(1) has five subunits: alpha(3), beta(3), gamma(1), delta(1), epsilon(1). CF(0) has three main subunits: a(1), b(2) and c(9-12). The alpha and beta chains form an alternating ring which encloses part of the gamma chain. CF(1) is attached to CF(0) by a central stalk formed by the gamma and epsilon chains, while a peripheral stalk is formed by the delta and b chains.

It localises to the cell membrane. The enzyme catalyses ATP + H2O + 4 H(+)(in) = ADP + phosphate + 5 H(+)(out). Produces ATP from ADP in the presence of a proton gradient across the membrane. The alpha chain is a regulatory subunit. The protein is ATP synthase subunit alpha of Desulfitobacterium hafniense (strain DSM 10664 / DCB-2).